A 247-amino-acid chain; its full sequence is Eukaryotic translation initiation factor 6 (247 aa).

A phosphoserine; by CK1 mark is found at Ser-174 and Ser-175.

It belongs to the eIF-6 family. As to quaternary structure, monomer. Associates with the 60S ribosomal subunit. Phosphorylation at Ser-174 and Ser-175 promotes nuclear export.

The protein localises to the cytoplasm. The protein resides in the nucleus. It localises to the nucleolus. In terms of biological role, binds to the 60S ribosomal subunit and prevents its association with the 40S ribosomal subunit to form the 80S initiation complex in the cytoplasm. Is also involved in ribosome biogenesis. Associates with pre-60S subunits in the nucleus and is involved in its nuclear export. The sequence is that of Eukaryotic translation initiation factor 6 (tif6) from Aspergillus oryzae (strain ATCC 42149 / RIB 40) (Yellow koji mold).